Reading from the N-terminus, the 925-residue chain is Colossin-D (925 aa).

A signal peptide spans 1-26; that stretch reads MIKVFKDLKFLILITIILLNLKSINC. N-linked (GlcNAc...) asparagine glycans are attached at residues N47, N95, N142, N166, N283, N334, N344, N378, N401, N511, and N642.

The protein belongs to the serine-aspartate repeat-containing protein (SDr) family.

It is found in the secreted. The chain is Colossin-D (colD) from Dictyostelium discoideum (Social amoeba).